A 532-amino-acid polypeptide reads, in one-letter code: IQ domain-containing protein IQM4 (532 aa).

2 disordered regions span residues 47–67 (SRTN…TGME) and 85–104 (PMNK…RNSL). A compositionally biased stretch (basic and acidic residues) spans 56 to 66 (NPQEKSPKTGM). Acidic residues predominate over residues 85–94 (PMNKEDEEIV). The region spanning 136-165 (LDAAATTLQKVYKSYRTRRNLADCAVVVEE) is the IQ domain. Disordered regions lie at residues 410-443 (SSGY…KERE) and 487-513 (PRIS…PRVR). Over residues 487–496 (PRISPGSTRF) the composition is skewed to polar residues. Residues 499–509 (PYGPIPSPRPS) are compositionally biased toward pro residues.

As to expression, expressed in roots, cauline leaves and flowers, and at lower levels in rosette leaves, stems and siliques.

It localises to the cytoplasm. The protein resides in the nucleus. May be involved in biotic and abiotic stress responses. This chain is IQ domain-containing protein IQM4, found in Arabidopsis thaliana (Mouse-ear cress).